The following is a 149-amino-acid chain: UPF0260 protein Avin_32930 (149 aa).

It belongs to the UPF0260 family.

This chain is UPF0260 protein Avin_32930, found in Azotobacter vinelandii (strain DJ / ATCC BAA-1303).